A 265-amino-acid chain; its full sequence is Sulfur carrier protein FdhD (265 aa).

Cysteine 107 serves as the catalytic Cysteine persulfide intermediate.

This sequence belongs to the FdhD family.

The protein resides in the cytoplasm. Required for formate dehydrogenase (FDH) activity. Acts as a sulfur carrier protein that transfers sulfur from IscS to the molybdenum cofactor prior to its insertion into FDH. The protein is Sulfur carrier protein FdhD of Staphylococcus aureus (strain NCTC 8325 / PS 47).